The chain runs to 883 residues: Alanine--tRNA ligase (883 aa).

Residues H562, H566, C664, and H668 each contribute to the Zn(2+) site.

Belongs to the class-II aminoacyl-tRNA synthetase family. Homotetramer. Zn(2+) serves as cofactor.

Its subcellular location is the cytoplasm. The enzyme catalyses tRNA(Ala) + L-alanine + ATP = L-alanyl-tRNA(Ala) + AMP + diphosphate. Its function is as follows. Catalyzes the attachment of alanine to tRNA(Ala) in a two-step reaction: alanine is first activated by ATP to form Ala-AMP and then transferred to the acceptor end of tRNA(Ala). Also edits incorrectly charged Ser-tRNA(Ala) and Gly-tRNA(Ala) via its editing domain. This Buchnera aphidicola subsp. Schizaphis graminum (strain Sg) protein is Alanine--tRNA ligase.